The following is a 429-amino-acid chain: Cytochrome bc1 complex Rieske iron-sulfur subunit (429 aa).

Residues 1–45 (MSRADDDAVGVPPTCGGRSDEEERRIVPGPNPQDGAKDGAKATAV) are disordered. Helical transmembrane passes span 96 to 116 (VAVW…IFLF), 137 to 157 (PLYG…AVLY), and 207 to 227 (FGVG…GGLI). The region spanning 316 to 410 (RNPVMLIRIK…ITIDTDGYLV (95 aa)) is the Rieske domain. Cysteine 353, histidine 355, cysteine 372, and histidine 375 together coordinate [2Fe-2S] cluster. A disulfide bond links cysteine 358 and cysteine 374.

The protein belongs to the Rieske iron-sulfur protein family. In terms of assembly, the cytochrome bc1 complex is composed of a cytochrome b (QcrB), the Rieske iron-sulfur protein (QcrA) and a diheme cytochrome c (QcrC) subunit. It depends on [2Fe-2S] cluster as a cofactor.

The protein resides in the cell membrane. Functionally, iron-sulfur subunit of the cytochrome bc1 complex, an essential component of the respiratory electron transport chain required for ATP synthesis. The bc1 complex catalyzes the oxidation of menaquinol and the reduction of cytochrome c in the respiratory chain. The bc1 complex operates through a Q-cycle mechanism that couples electron transfer to generation of the proton gradient that drives ATP synthesis. This is Cytochrome bc1 complex Rieske iron-sulfur subunit (qcrA) from Mycobacterium bovis (strain ATCC BAA-935 / AF2122/97).